Reading from the N-terminus, the 402-residue chain is 26S proteasome non-ATPase regulatory subunit 4 homolog (402 aa).

The region spanning 5 to 189 is the VWFA domain; the sequence is ATMICIDNSE…LSDVLISTPI (185 aa). The UIM 1 domain occupies 221-240; the sequence is NVDPELALALRLSMEEERAR. A compositionally biased stretch (basic and acidic residues) spans 241–261; sequence QEAIAKKAAEESSGAENKDHA. Disordered stretches follow at residues 241 to 292 and 302 to 321; these read QEAI…EDDD and MSME…MAEA. 2 consecutive UIM domains span residues 291 to 310 and 323 to 342; these read DDAQ…GSSG and VDDQ…AGGS. The tract at residues 363-402 is disordered; sequence SLPGVDPNDPSVKDLLASLHGQGEQEKKEDKSDKPEDEKK. Over residues 385–402 the composition is skewed to basic and acidic residues; sequence GEQEKKEDKSDKPEDEKK.

Belongs to the proteasome subunit S5A family. In terms of assembly, component of the 19S regulatory particle (RP/PA700) base subcomplex of the 26S proteasome. The 26S proteasome is composed of a core protease (CP), known as the 20S proteasome, capped at one or both ends by the 19S regulatory particle (RP/PA700). The RP/PA700 complex is composed of at least 17 different subunits in two subcomplexes, the base and the lid, which form the portions proximal and distal to the 20S proteolytic core, respectively. Interacts with PI4KG4.

Functionally, plays a role in maintaining the structural integrity of the 19S regulatory particle (RP), subcomplex of the 26S proteasome. Plays a major role in both the direct and indirect recognition of ubiquitinated substrates of ubiquitin/26S proteasome-mediated proteolysis (UPP). Binds and presumably selects ubiquitin-conjugates for destruction. This Oryza sativa subsp. japonica (Rice) protein is 26S proteasome non-ATPase regulatory subunit 4 homolog.